Consider the following 377-residue polypeptide: Queuine tRNA-ribosyltransferase (377 aa).

Aspartate 93 acts as the Proton acceptor in catalysis. Substrate-binding positions include 93-97, aspartate 147, glutamine 191, and glycine 218; that span reads DSGGF. Residues 249–255 are RNA binding; that stretch reads GVGTPLD. Aspartate 268 functions as the Nucleophile in the catalytic mechanism. The RNA binding; important for wobble base 34 recognition stretch occupies residues 273–277; the sequence is TRNAR. Zn(2+) contacts are provided by cysteine 306, cysteine 308, cysteine 311, and histidine 337.

It belongs to the queuine tRNA-ribosyltransferase family. As to quaternary structure, homodimer. Within each dimer, one monomer is responsible for RNA recognition and catalysis, while the other monomer binds to the replacement base PreQ1. The cofactor is Zn(2+).

The catalysed reaction is 7-aminomethyl-7-carbaguanine + guanosine(34) in tRNA = 7-aminomethyl-7-carbaguanosine(34) in tRNA + guanine. It functions in the pathway tRNA modification; tRNA-queuosine biosynthesis. In terms of biological role, catalyzes the base-exchange of a guanine (G) residue with the queuine precursor 7-aminomethyl-7-deazaguanine (PreQ1) at position 34 (anticodon wobble position) in tRNAs with GU(N) anticodons (tRNA-Asp, -Asn, -His and -Tyr). Catalysis occurs through a double-displacement mechanism. The nucleophile active site attacks the C1' of nucleotide 34 to detach the guanine base from the RNA, forming a covalent enzyme-RNA intermediate. The proton acceptor active site deprotonates the incoming PreQ1, allowing a nucleophilic attack on the C1' of the ribose to form the product. After dissociation, two additional enzymatic reactions on the tRNA convert PreQ1 to queuine (Q), resulting in the hypermodified nucleoside queuosine (7-(((4,5-cis-dihydroxy-2-cyclopenten-1-yl)amino)methyl)-7-deazaguanosine). The chain is Queuine tRNA-ribosyltransferase from Oleidesulfovibrio alaskensis (strain ATCC BAA-1058 / DSM 17464 / G20) (Desulfovibrio alaskensis).